A 131-amino-acid chain; its full sequence is UPF0102 protein YraN (131 aa).

The protein belongs to the UPF0102 family.

This Salmonella arizonae (strain ATCC BAA-731 / CDC346-86 / RSK2980) protein is UPF0102 protein YraN.